A 458-amino-acid polypeptide reads, in one-letter code: Ammonium transporter Rh type B (458 aa).

Topologically, residues 1 to 11 (MTDAATNMRLK) are cytoplasmic. A helical membrane pass occupies residues 12-32 (LPITCFILEIILIILFGTLVQ). The Extracellular segment spans residues 33–58 (YDYETDAKEWHNTSHQDYENDFYFRY). N-linked (GlcNAc...) asparagine glycosylation occurs at Asn-44. The chain crosses the membrane as a helical span at residues 59 to 79 (PSFQDVHVMIFVGFGFLMTFL). Residues 80–83 (QRYG) are Cytoplasmic-facing. Residues 84–104 (FGSVGFNFLIAAFSLQWATLM) form a helical membrane-spanning segment. Topologically, residues 105–121 (QGFFHGMHGGKIHIGVE) are extracellular. Residues 122-142 (SMINADFCTGSVLISFGAVLG) traverse the membrane as a helical segment. At 143–151 (KTSPIQLLT) the chain is on the cytoplasmic side. Residues 152 to 172 (MAIFEVTLFAVNEFILLSLLG) form a helical membrane-spanning segment. Over 173–176 (TKDA) the chain is Extracellular. Residues 177–197 (GGSMTIHTFGAYFGLMVTRIL) form a helical membrane-spanning segment. The Cytoplasmic portion of the chain corresponds to 198–216 (YRPNLDKSKHRNSSVYHSD). A helical membrane pass occupies residues 217 to 237 (LFAMIGTVYLWMFWPSFNSAI). Residues 238 to 247 (TAHGDDQHRT) lie on the Extracellular side of the membrane. Residues 248–270 (ALNTYYSLAACTLATYGMSAITS) traverse the membrane as a helical segment. Topologically, residues 271-274 (HDGK) are cytoplasmic. Residues 275–295 (LDMVHIQNAALAGGVAVGTAG) traverse the membrane as a helical segment. Residues 296–298 (EMM) lie on the Extracellular side of the membrane. The chain crosses the membrane as a helical span at residues 299 to 319 (LTPFGSMIVGFMAGIISVLGF). Topologically, residues 320–340 (KFLSPILEDKLKIQDTCGIHN) are cytoplasmic. The helical transmembrane segment at 341 to 361 (LHGMPGVLGAIVGAVTAALAT) threads the bilayer. At 362–391 (TDVYGQGMADVFPAVADGSVNATKQGGIQA) the chain is on the extracellular side. A helical membrane pass occupies residues 392–412 (LSLAITLGIAVLGGLIVGFVL). Topologically, residues 413-458 (KLPVFGTPPDTLCFEDSVYWEVPGSESPEEGELTSVKPEETEHLNS) are cytoplasmic. Positions 436–458 (GSESPEEGELTSVKPEETEHLNS) are disordered. A compositionally biased stretch (basic and acidic residues) spans 449–458 (KPEETEHLNS).

The protein belongs to the ammonium transporter (TC 2.A.49) family. Rh subfamily. Specifically expressed in the gill by pavement cells (at protein level).

The protein localises to the apicolateral cell membrane. It is found in the cytoplasmic vesicle membrane. Its function is as follows. Functions as an ammonia transporter. May play a role in the elimination of ammonia in the gill. This is Ammonium transporter Rh type B (rhbg) from Takifugu rubripes (Japanese pufferfish).